We begin with the raw amino-acid sequence, 438 residues long: Enolase (438 aa).

Residues H159 and E168 each coordinate substrate. Catalysis depends on E211, which acts as the Proton donor. Residues D246, E297, and D322 each coordinate Mg(2+). Residues E297 and D322 each contribute to the substrate site. K347 acts as the Proton acceptor in catalysis. Substrate is bound by residues 374–377 (SHRS) and K398.

The protein belongs to the enolase family. Homodimer. Requires Mg(2+) as cofactor.

The protein resides in the cytoplasm. The enzyme catalyses (2R)-2-phosphoglycerate = phosphoenolpyruvate + H2O. Its pathway is carbohydrate degradation; glycolysis; pyruvate from D-glyceraldehyde 3-phosphate: step 4/5. This chain is Enolase (ENO1), found in Cryphonectria parasitica (Chestnut blight fungus).